Here is a 511-residue protein sequence, read N- to C-terminus: Histidine ammonia-lyase (511 aa).

A cross-link (5-imidazolinone (Ala-Gly)) is located at residues 142-144 (ASG). Ser143 is modified (2,3-didehydroalanine (Ser)).

Belongs to the PAL/histidase family. Post-translationally, contains an active site 4-methylidene-imidazol-5-one (MIO), which is formed autocatalytically by cyclization and dehydration of residues Ala-Ser-Gly.

It is found in the cytoplasm. It catalyses the reaction L-histidine = trans-urocanate + NH4(+). The protein operates within amino-acid degradation; L-histidine degradation into L-glutamate; N-formimidoyl-L-glutamate from L-histidine: step 1/3. The sequence is that of Histidine ammonia-lyase from Rhizobium rhizogenes (strain K84 / ATCC BAA-868) (Agrobacterium radiobacter).